A 689-amino-acid chain; its full sequence is DNA ligase (689 aa).

NAD(+)-binding positions include aspartate 40–aspartate 44, serine 89–leucine 90, and glutamate 121. The active-site N6-AMP-lysine intermediate is the lysine 123. Positions 144, 179, 295, and 319 each coordinate NAD(+). The Zn(2+) site is built by cysteine 413, cysteine 416, cysteine 431, and cysteine 437. One can recognise a BRCT domain in the interval arginine 610 to alanine 689.

This sequence belongs to the NAD-dependent DNA ligase family. LigA subfamily. Mg(2+) is required as a cofactor. The cofactor is Mn(2+).

It carries out the reaction NAD(+) + (deoxyribonucleotide)n-3'-hydroxyl + 5'-phospho-(deoxyribonucleotide)m = (deoxyribonucleotide)n+m + AMP + beta-nicotinamide D-nucleotide.. Functionally, DNA ligase that catalyzes the formation of phosphodiester linkages between 5'-phosphoryl and 3'-hydroxyl groups in double-stranded DNA using NAD as a coenzyme and as the energy source for the reaction. It is essential for DNA replication and repair of damaged DNA. This chain is DNA ligase, found in Rickettsia prowazekii (strain Madrid E).